A 245-amino-acid chain; its full sequence is MSGQKPIYRRILLKLSGEALLGKEAYGIDSSVLDQIAEEVTAVHQMGVQVAIVIGGGNIFRGVSGASRGMDRSTADYMGMLATVMNALALQQALEKHGTSTRVQSAIDMKEVAEPYIRRRALRHMEKGRIVIFAAGTGLPFFTTDTTAALRAIEMGAEVLMKATKVDGIYASDPKKNPSALRYDRISFSEVLQKDLKVMDATAISLAKDQNMRIVVFNLRKKGNIKKIVLGKCIGTVVEGCDHAQ.

ATP is bound at residue 14 to 17 (KLSG). Gly56 contacts UMP. 2 residues coordinate ATP: Gly57 and Arg61. UMP contacts are provided by residues Asp76 and 137–144 (TGLPFFTT). ATP-binding residues include Thr164, Tyr170, and Asp173.

This sequence belongs to the UMP kinase family. Homohexamer.

Its subcellular location is the cytoplasm. It catalyses the reaction UMP + ATP = UDP + ADP. The protein operates within pyrimidine metabolism; CTP biosynthesis via de novo pathway; UDP from UMP (UMPK route): step 1/1. With respect to regulation, inhibited by UTP. Functionally, catalyzes the reversible phosphorylation of UMP to UDP. This chain is Uridylate kinase, found in Syntrophobacter fumaroxidans (strain DSM 10017 / MPOB).